Consider the following 214-residue polypeptide: MRRLIDKTLVVASHNAGKIREIRDLIGPLGFEAKSAADLNFVEPDETGTTFEENATIKALASAKASGLPALSDDSGLAVDALGGAPGVYTANWAEREDGSRDFQMAMEKVEEALRAKGAVKPESRTARFVSVLCLAWPDGHVELFRGEVEGYVVWPPRGTSGFGYDPVFQPKGYDTTFGEMSAEEKHGWKPGDSEALSHRARAFKLFAETCLGA.

Substrate is bound at residue 13 to 18; sequence SHNAGK. Mg(2+) is bound by residues Asp-45 and Asp-74. The Proton acceptor role is filled by Asp-74. Substrate is bound by residues Ser-75, 163–166, Lys-186, and 199–200; these read FGYD and HR.

It belongs to the HAM1 NTPase family. As to quaternary structure, homodimer. It depends on Mg(2+) as a cofactor.

The enzyme catalyses XTP + H2O = XMP + diphosphate + H(+). It catalyses the reaction dITP + H2O = dIMP + diphosphate + H(+). It carries out the reaction ITP + H2O = IMP + diphosphate + H(+). Functionally, pyrophosphatase that catalyzes the hydrolysis of nucleoside triphosphates to their monophosphate derivatives, with a high preference for the non-canonical purine nucleotides XTP (xanthosine triphosphate), dITP (deoxyinosine triphosphate) and ITP. Seems to function as a house-cleaning enzyme that removes non-canonical purine nucleotides from the nucleotide pool, thus preventing their incorporation into DNA/RNA and avoiding chromosomal lesions. The polypeptide is dITP/XTP pyrophosphatase (Rhizobium meliloti (strain 1021) (Ensifer meliloti)).